Here is a 202-residue protein sequence, read N- to C-terminus: MSAQEIKGLGMIPMVIEQSGRGERSYDIYSRLLKERIIFLVGEVNDQTANLVVAQLLFLESENPDKDISFYINSPGGSVSAGMAIYDTMQFIKPDVSTMCIGFAASMGAFLLAAGEKGKRFSLPNSKIMIHQVLGGARGQATDIEIHARDILRTKDQMNRILAERTGQPLEKVKSDTERDYFLTADEAKDYGLVDQVIAKRS.

Ser106 functions as the Nucleophile in the catalytic mechanism. His131 is a catalytic residue.

It belongs to the peptidase S14 family. Fourteen ClpP subunits assemble into 2 heptameric rings which stack back to back to give a disk-like structure with a central cavity, resembling the structure of eukaryotic proteasomes.

It localises to the cytoplasm. The catalysed reaction is Hydrolysis of proteins to small peptides in the presence of ATP and magnesium. alpha-casein is the usual test substrate. In the absence of ATP, only oligopeptides shorter than five residues are hydrolyzed (such as succinyl-Leu-Tyr-|-NHMec, and Leu-Tyr-Leu-|-Tyr-Trp, in which cleavage of the -Tyr-|-Leu- and -Tyr-|-Trp bonds also occurs).. Cleaves peptides in various proteins in a process that requires ATP hydrolysis. Has a chymotrypsin-like activity. Plays a major role in the degradation of misfolded proteins. The sequence is that of ATP-dependent Clp protease proteolytic subunit from Variovorax paradoxus (strain S110).